A 210-amino-acid polypeptide reads, in one-letter code: Orotate phosphoribosyltransferase (210 aa).

5-phospho-alpha-D-ribose 1-diphosphate contacts are provided by residues arginine 97, lysine 101, histidine 103, and 123 to 131; that span reads EDLISTGGS. Orotate is bound at residue serine 127.

The protein belongs to the purine/pyrimidine phosphoribosyltransferase family. PyrE subfamily. Homodimer. The cofactor is Mg(2+).

The catalysed reaction is orotidine 5'-phosphate + diphosphate = orotate + 5-phospho-alpha-D-ribose 1-diphosphate. Its pathway is pyrimidine metabolism; UMP biosynthesis via de novo pathway; UMP from orotate: step 1/2. In terms of biological role, catalyzes the transfer of a ribosyl phosphate group from 5-phosphoribose 1-diphosphate to orotate, leading to the formation of orotidine monophosphate (OMP). The chain is Orotate phosphoribosyltransferase from Porphyromonas gingivalis (strain ATCC BAA-308 / W83).